The following is a 68-amino-acid chain: Probable Sec-independent protein translocase protein TatE (68 aa).

Residues 1 to 21 form a helical membrane-spanning segment; it reads MGEISITKLLVVAALIILVFG. Residues 43-68 form a disordered region; sequence MNEDDDSAKKTTAEEEAPAQKLSHKE.

It belongs to the TatA/E family. TatE subfamily.

It is found in the cell inner membrane. In terms of biological role, part of the twin-arginine translocation (Tat) system that transports large folded proteins containing a characteristic twin-arginine motif in their signal peptide across membranes. TatE shares overlapping functions with TatA. The polypeptide is Probable Sec-independent protein translocase protein TatE (Klebsiella pneumoniae subsp. pneumoniae (strain ATCC 700721 / MGH 78578)).